A 456-amino-acid chain; its full sequence is tRNA(Ile)-lysidine synthase (456 aa).

28-33 (SGGSDS) serves as a coordination point for ATP.

It belongs to the tRNA(Ile)-lysidine synthase family.

Its subcellular location is the cytoplasm. The enzyme catalyses cytidine(34) in tRNA(Ile2) + L-lysine + ATP = lysidine(34) in tRNA(Ile2) + AMP + diphosphate + H(+). Its function is as follows. Ligates lysine onto the cytidine present at position 34 of the AUA codon-specific tRNA(Ile) that contains the anticodon CAU, in an ATP-dependent manner. Cytidine is converted to lysidine, thus changing the amino acid specificity of the tRNA from methionine to isoleucine. This chain is tRNA(Ile)-lysidine synthase, found in Brucella anthropi (strain ATCC 49188 / DSM 6882 / CCUG 24695 / JCM 21032 / LMG 3331 / NBRC 15819 / NCTC 12168 / Alc 37) (Ochrobactrum anthropi).